The chain runs to 742 residues: Catalase-peroxidase (742 aa).

Positions 1-43 (MSDSCPVAHEGNTQSTSESENPVIPSPTPAANRPRNNRDWWPN) are disordered. Residues 11-20 (GNTQSTSESE) show a composition bias toward polar residues. A cross-link (tryptophyl-tyrosyl-methioninium (Trp-Tyr) (with M-257)) is located at residues 109–231 (WHAAGTYRIA…LGAVQMGLIY (123 aa)). Residue histidine 110 is the Proton acceptor of the active site. The segment at residues 231–257 (YVNPEGPNGQPDPLAAARDIRETFSRM) is a cross-link (tryptophyl-tyrosyl-methioninium (Tyr-Met) (with W-109)). Histidine 272 is a binding site for heme b.

It belongs to the peroxidase family. Peroxidase/catalase subfamily. Homodimer or homotetramer. Requires heme b as cofactor. Formation of the three residue Trp-Tyr-Met cross-link is important for the catalase, but not the peroxidase activity of the enzyme.

It carries out the reaction H2O2 + AH2 = A + 2 H2O. It catalyses the reaction 2 H2O2 = O2 + 2 H2O. Functionally, bifunctional enzyme with both catalase and broad-spectrum peroxidase activity. This is Catalase-peroxidase from Rhodococcus jostii (strain RHA1).